The chain runs to 96 residues: Small ribosomal subunit protein bS18 (96 aa).

Residues 1 to 20 (MSHGGKRRSGDGGSEGSSYS) are disordered.

It belongs to the bacterial ribosomal protein bS18 family. In terms of assembly, part of the 30S ribosomal subunit. Forms a tight heterodimer with protein bS6.

In terms of biological role, binds as a heterodimer with protein bS6 to the central domain of the 16S rRNA, where it helps stabilize the platform of the 30S subunit. This chain is Small ribosomal subunit protein bS18, found in Anaplasma phagocytophilum (strain HZ).